We begin with the raw amino-acid sequence, 391 residues long: Zinc finger protein DPF3 (391 aa).

Over residues 152–165 (ENGDGFHDDEDFEV) the composition is skewed to acidic residues. Disordered stretches follow at residues 152 to 200 (ENGD…PYVC) and 236 to 266 (LAEEEGEEERETEIPQSPPVHHENHKPQKAP). Basic residues predominate over residues 169–183 (KRKHRNKGRGRGSGR). Residues 198–235 (YVCDNRYKQKHNSKTADSVCGKRYKNRPGLSYHYAHTH) form a C2H2-type zinc finger. 2 consecutive PHD-type zinc fingers follow at residues 273-333 (NDYC…CKSC) and 330-380 (CKSC…CQNL).

In terms of assembly, component of the BAF complex. Interacts with acetylated histones H3 and H4. Component of neuron-specific chromatin remodeling complex (nBAF complex), a subfamily of ATP-dependent SWI/SNF chromatin remodeling complexes. In terms of tissue distribution, expressed in the heart and somites.

It localises to the nucleus. Muscle-specific component of the BAF complex, a multiprotein complex involved in transcriptional activation and repression of select genes by chromatin remodeling (alteration of DNA-nucleosome topology). Specifically binds acetylated lysines on histone 3 and 4. In the complex, it acts as a tissue-specific anchor between histone acetylations and methylations and chromatin remodeling. Belongs to the neuron-specific chromatin remodeling complex (nBAF complex) and may play a role in neural development. Plays an essential role in heart and skeletal muscle development. The chain is Zinc finger protein DPF3 (dpf3) from Danio rerio (Zebrafish).